The following is a 507-amino-acid chain: ATP synthase subunit alpha, chloroplastic (507 aa).

An ATP-binding site is contributed by 170–177 (GDRQTGKT). T257 is subject to Phosphothreonine.

This sequence belongs to the ATPase alpha/beta chains family. In terms of assembly, F-type ATPases have 2 components, CF(1) - the catalytic core - and CF(0) - the membrane proton channel. CF(1) has five subunits: alpha(3), beta(3), gamma(1), delta(1), epsilon(1). CF(0) has four main subunits: a, b, b' and c.

The protein resides in the plastid. Its subcellular location is the chloroplast thylakoid membrane. It carries out the reaction ATP + H2O + 4 H(+)(in) = ADP + phosphate + 5 H(+)(out). In terms of biological role, produces ATP from ADP in the presence of a proton gradient across the membrane. The alpha chain is a regulatory subunit. The sequence is that of ATP synthase subunit alpha, chloroplastic from Draba nemorosa (Woodland whitlowgrass).